Consider the following 271-residue polypeptide: 3-methyl-2-oxobutanoate hydroxymethyltransferase (271 aa).

The Mg(2+) site is built by aspartate 50 and aspartate 89. 3-methyl-2-oxobutanoate-binding positions include 50–51 (DS), aspartate 89, and lysine 118. Glutamate 120 contacts Mg(2+). Glutamate 187 (proton acceptor) is an active-site residue.

Belongs to the PanB family. Homodecamer; pentamer of dimers. The cofactor is Mg(2+).

Its subcellular location is the cytoplasm. The enzyme catalyses 3-methyl-2-oxobutanoate + (6R)-5,10-methylene-5,6,7,8-tetrahydrofolate + H2O = 2-dehydropantoate + (6S)-5,6,7,8-tetrahydrofolate. Its pathway is cofactor biosynthesis; (R)-pantothenate biosynthesis; (R)-pantoate from 3-methyl-2-oxobutanoate: step 1/2. Catalyzes the reversible reaction in which hydroxymethyl group from 5,10-methylenetetrahydrofolate is transferred onto alpha-ketoisovalerate to form ketopantoate. This is 3-methyl-2-oxobutanoate hydroxymethyltransferase from Campylobacter concisus (strain 13826).